Here is a 409-residue protein sequence, read N- to C-terminus: E3 ubiquitin-protein ligase MARCHF4 (409 aa).

Positions 1 to 17 are cleaved as a signal peptide; sequence MLMPLGGLLWWWCCCCG. Residues 92–133 are disordered; it reads GPREAVGRETPPLPPPPPLPPSGDDDWDGPATGPPASLLSSA. Pro residues predominate over residues 102-112; it reads PPLPPPPPLPP. An RING-CH-type zinc finger spans residues 154-214; it reads DSGMRTPLCR…ELCYYKYHVI (61 aa). Positions 162, 165, 178, 180, 188, 191, 204, and 207 each coordinate Zn(2+). The next 2 membrane-spanning stretches (helical) occupy residues 242–262 and 271–291; these read LGSLFLIASISWLIWSTFSPS and LFQICYGMYGFMDVVCIGLII. 2 disordered regions span residues 323-372 and 389-409; these read EDQK…GPVS and PHDQRSTQGSGRELVMRVTTV. Positions 328 to 343 are enriched in polar residues; it reads GGRTNLQTSSSAQANL.

It localises to the golgi apparatus membrane. It carries out the reaction S-ubiquitinyl-[E2 ubiquitin-conjugating enzyme]-L-cysteine + [acceptor protein]-L-lysine = [E2 ubiquitin-conjugating enzyme]-L-cysteine + N(6)-ubiquitinyl-[acceptor protein]-L-lysine.. It functions in the pathway protein modification; protein ubiquitination. In terms of biological role, E3 ubiquitin-protein ligase that may mediate ubiquitination of MHC-I and CD4, and promote their subsequent endocytosis and sorting to lysosomes via multivesicular bodies. E3 ubiquitin ligases accept ubiquitin from an E2 ubiquitin-conjugating enzyme in the form of a thioester and then directly transfer the ubiquitin to targeted substrates. This Mus musculus (Mouse) protein is E3 ubiquitin-protein ligase MARCHF4 (Marchf4).